The sequence spans 378 residues: Erythronate-4-phosphate dehydrogenase (378 aa).

Ser-45 and Thr-66 together coordinate substrate. Residues Asp-146 and Thr-175 each contribute to the NAD(+) site. Residue Arg-208 is part of the active site. Residue Asp-232 coordinates NAD(+). Glu-237 is an active-site residue. His-254 (proton donor) is an active-site residue. Residue Gly-257 participates in NAD(+) binding. A substrate-binding site is contributed by Tyr-258.

Belongs to the D-isomer specific 2-hydroxyacid dehydrogenase family. PdxB subfamily. Homodimer.

Its subcellular location is the cytoplasm. It catalyses the reaction 4-phospho-D-erythronate + NAD(+) = (R)-3-hydroxy-2-oxo-4-phosphooxybutanoate + NADH + H(+). The protein operates within cofactor biosynthesis; pyridoxine 5'-phosphate biosynthesis; pyridoxine 5'-phosphate from D-erythrose 4-phosphate: step 2/5. Catalyzes the oxidation of erythronate-4-phosphate to 3-hydroxy-2-oxo-4-phosphonooxybutanoate. This Shigella boydii serotype 4 (strain Sb227) protein is Erythronate-4-phosphate dehydrogenase.